The sequence spans 253 residues: Small ribosomal subunit protein uS2 (253 aa).

Positions 226 to 253 are disordered; sequence QGADNADVEKELSESVEENSAEEVDDAE. Acidic residues predominate over residues 239–253; sequence ESVEENSAEEVDDAE.

This sequence belongs to the universal ribosomal protein uS2 family.

This Lactobacillus delbrueckii subsp. bulgaricus (strain ATCC 11842 / DSM 20081 / BCRC 10696 / JCM 1002 / NBRC 13953 / NCIMB 11778 / NCTC 12712 / WDCM 00102 / Lb 14) protein is Small ribosomal subunit protein uS2.